A 344-amino-acid polypeptide reads, in one-letter code: Ion-translocating oxidoreductase complex subunit D (344 aa).

The next 4 helical transmembrane spans lie at 23 to 43 (LVLG…GPGT), 44 to 64 (LLNL…MLAL), 77 to 99 (SALV…WLTL), and 120 to 140 (PFNP…LEMT). Thr-172 bears the FMN phosphoryl threonine mark. The next 5 helical transmembrane spans lie at 198-218 (LGSA…LFLL), 222-242 (LFTW…SLLF), 252-272 (GSPL…FIVT), 285-305 (LVFG…GGYP), and 306-326 (DGMA…DYYT).

This sequence belongs to the NqrB/RnfD family. In terms of assembly, the complex is composed of six subunits: RnfA, RnfB, RnfC, RnfD, RnfE and RnfG. Requires FMN as cofactor.

It is found in the cell inner membrane. Part of a membrane-bound complex that couples electron transfer with translocation of ions across the membrane. This Pseudomonas aeruginosa (strain LESB58) protein is Ion-translocating oxidoreductase complex subunit D.